A 193-amino-acid polypeptide reads, in one-letter code: uncharacterized protein (193 aa).

This is an uncharacterized protein from Mycoplasma pneumoniae (strain ATCC 29342 / M129 / Subtype 1) (Mycoplasmoides pneumoniae).